Consider the following 225-residue polypeptide: Uracil-DNA glycosylase (225 aa).

Asp68 acts as the Proton acceptor in catalysis.

The protein belongs to the uracil-DNA glycosylase (UDG) superfamily. UNG family.

Its subcellular location is the cytoplasm. The catalysed reaction is Hydrolyzes single-stranded DNA or mismatched double-stranded DNA and polynucleotides, releasing free uracil.. Its function is as follows. Excises uracil residues from the DNA which can arise as a result of misincorporation of dUMP residues by DNA polymerase or due to deamination of cytosine. The chain is Uracil-DNA glycosylase from Mycolicibacterium vanbaalenii (strain DSM 7251 / JCM 13017 / BCRC 16820 / KCTC 9966 / NRRL B-24157 / PYR-1) (Mycobacterium vanbaalenii).